Reading from the N-terminus, the 222-residue chain is Non-structural protein V (222 aa).

Positions 61-107 are disordered; sequence ESTNHQKGSVGGGAKPKKPRPKIAIVPADDKTVPGKPIPNPLLGLDS. Residues His-171, Cys-190, Cys-194, Cys-206, Cys-208, Cys-211, Cys-215, and Cys-218 each contribute to the Zn(2+) site.

Belongs to the paramyxoviruses V protein family. As to quaternary structure, interacts with host DDB1, STAT2 and IFIH1/MDA5. Interacts with host RIGI regulatory protein (via CARDs domain) and host TRIM25 (via SPRY domain); these interactions prevent TRIM25-mediated ubiquitination of RIG-I and disrupts downstream RIG-I signaling.

It is found in the host cytoplasm. In terms of biological role, plays an essential role in the inhibition of host immune response. Prevents the establishment of cellular antiviral state by blocking interferon-alpha/beta (IFN-alpha/beta) production and signaling pathway. Interacts with host IFIH1/MDA5 and DHX58/LGP2 to inhibit the transduction pathway involved in the activation of IFN-beta promoter, thus protecting the virus against cell antiviral state. Efficiently blocks type I IFN signaling following infection by behaving as a substrate receptor for CUL4-DDB1 E3 ligase complex and targeting host STAT1 for proteasomal degradation. Blocks the type I interferon signaling pathway by disrupting the RIG-I signaling pathway. The sequence is that of Non-structural protein V (P/V) from Parainfluenza virus 5 (strain W3) (PIV5).